Consider the following 244-residue polypeptide: MRWQDQGIVIAIRKYGDDQIIISIFTQKHGLKKGLAKYSKKATHRLQIGDYVNVTWSSRLISNLGCFKYELIKSTLYHYIQDNLKTMCIAFSTVILDQVLPENEENYIIYNCLDIFINSIQFQDINWKIKYLRLELTLLSELGFGLDLSRCAVNNTNENLTFISPKTGKAVSKTVGLPYSKSLLPLPQLLYDVYNNYEYKYSKTDFKLSLNVLGYFFKKHFLTEKNTILIKYREEIIKLIDLRD.

Belongs to the RecO family.

Functionally, involved in DNA repair and RecF pathway recombination. This is DNA repair protein RecO from Ehrlichia chaffeensis (strain ATCC CRL-10679 / Arkansas).